The chain runs to 412 residues: tRNA N6-adenosine threonylcarbamoyltransferase, mitochondrial (412 aa).

The transit peptide at 1–78 directs the protein to the mitochondrion; sequence MLCLVYNSIL…IICLNTHRTI (78 aa). His157 and His161 together coordinate a divalent metal cation. Substrate is bound by residues 179–183, Asp212, Ala228, Glu232, 328–329, and Ser363; these read LVSGG and RN. Asp364 provides a ligand contact to a divalent metal cation.

The protein belongs to the KAE1 / TsaD family. Homodimer. A divalent metal cation serves as cofactor.

It localises to the mitochondrion. The enzyme catalyses L-threonylcarbamoyladenylate + adenosine(37) in tRNA = N(6)-L-threonylcarbamoyladenosine(37) in tRNA + AMP + H(+). Its function is as follows. Required for the formation of a threonylcarbamoyl group on adenosine at position 37 (t(6)A37) in mitochondrial tRNAs that read codons beginning with adenine. Probably involved in the transfer of the threonylcarbamoyl moiety of threonylcarbamoyl-AMP (TC-AMP) to the N6 group of A37. Involved in mitochondrial genome maintenance. This Schizosaccharomyces pombe (strain 972 / ATCC 24843) (Fission yeast) protein is tRNA N6-adenosine threonylcarbamoyltransferase, mitochondrial (pgp1).